Reading from the N-terminus, the 547-residue chain is Inactive delta-guaiene synthase (547 aa).

The Mg(2+) site is built by aspartate 299, aspartate 303, and aspartate 444. A DDXXD motif motif is present at residues 299–303; that stretch reads DDTYD.

The protein belongs to the terpene synthase family. It depends on Mg(2+) as a cofactor.

This is Inactive delta-guaiene synthase (C1) from Aquilaria crassna (Eagle wood).